The sequence spans 134 residues: Profilin-2 (134 aa).

Thr114 is modified (phosphothreonine).

It belongs to the profilin family. In terms of assembly, occurs in many kinds of cells as a complex with monomeric actin in a 1:1 ratio. Phosphorylated by MAP kinases.

The protein resides in the cytoplasm. It localises to the cytoskeleton. In terms of biological role, binds to actin and affects the structure of the cytoskeleton. At high concentrations, profilin prevents the polymerization of actin, whereas it enhances it at low concentrations. By binding to PIP2, it inhibits the formation of IP3 and DG. This chain is Profilin-2 (PRO2), found in Nicotiana tabacum (Common tobacco).